The sequence spans 285 residues: Para-Rep C6 (285 aa).

One can recognise a CRESS-DNA virus Rep endonuclease domain in the interval Thr-3–Phe-99. Residues Val-10 to Leu-13 carry the RCR-1 motif. A divalent metal cation contacts are provided by Glu-36 and His-42. Positions His-42–Gln-44 match the RCR-2 motif. The Nuclear localization signal signature appears at Arg-52 to Arg-74. The active-site For DNA cleavage activity is Tyr-82. Residues Tyr-82–Lys-85 carry the RCR-3 motif. A divalent metal cation is bound at residue Asp-87. The Nuclear localization signal signature appears at Phe-99–His-105. Gly-175–Ser-183 is a binding site for ATP.

This sequence belongs to the nanoviridea/circoviridae replication-associated protein family. In terms of assembly, homooligomer (Potential). Rep binds to repeated DNA motifs (iterons). Mg(2+) serves as cofactor. Mn(2+) is required as a cofactor.

Its subcellular location is the host nucleus. The enzyme catalyses ATP + H2O = ADP + phosphate + H(+). In terms of biological role, initiates and terminates the replication only of its own subviral DNA molecule. The closed circular ssDNA genome is first converted to a superhelical dsDNA. Rep binds a specific hairpin at the genome origin of replication. Introduces an endonucleolytic nick within the intergenic region of the genome, thereby initiating the rolling circle replication (RCR). Following cleavage, binds covalently to the 5'-phosphate of DNA as a tyrosyl ester. The cleavage gives rise to a free 3'-OH that serves as a primer for the cellular DNA polymerase. The polymerase synthesizes the (+) strand DNA by rolling circle mechanism. After one round of replication, a Rep-catalyzed nucleotidyl transfer reaction releases a circular single-stranded virus genome, thereby terminating the replication. Displays origin-specific DNA cleavage, nucleotidyl transferase, ATPase and helicase activities. The sequence is that of Para-Rep C6 (C6) from Subterranean clover stunt C6 alphasatellite (SCSC6A).